The sequence spans 396 residues: S-adenosylmethionine synthase 2 (396 aa).

Glu13 is a Mg(2+) binding site. His19 provides a ligand contact to ATP. Glu47 lines the K(+) pocket. L-methionine-binding residues include Glu60 and Gln103. Residues 171-173 (DGK), 239-242 (SGRF), Asp250, 256-257 (RK), Ala273, Lys277, and Lys281 each bind ATP. Residue Asp250 coordinates L-methionine. An L-methionine-binding site is contributed by Lys281.

It belongs to the AdoMet synthase family. Homotetramer. Mn(2+) is required as a cofactor. It depends on Mg(2+) as a cofactor. Requires Co(2+) as cofactor. The cofactor is K(+). As to expression, expressed in roots, stems and leaves (at protein level).

The protein localises to the cytoplasm. The catalysed reaction is L-methionine + ATP + H2O = S-adenosyl-L-methionine + phosphate + diphosphate. The protein operates within amino-acid biosynthesis; S-adenosyl-L-methionine biosynthesis; S-adenosyl-L-methionine from L-methionine: step 1/1. Its function is as follows. Catalyzes the formation of S-adenosylmethionine from methionine and ATP. The reaction comprises two steps that are both catalyzed by the same enzyme: formation of S-adenosylmethionine (AdoMet) and triphosphate, and subsequent hydrolysis of the triphosphate. May be involved in the synthesis of betain in response to abiotic stress such as high salinity. This chain is S-adenosylmethionine synthase 2 (SAMS2), found in Atriplex nummularia (Old man saltbush).